A 685-amino-acid polypeptide reads, in one-letter code: MTSSSYTDIDTLAINTIRTLAVDTTAHAKSGHPGAPMGLAPAAHVLFSRIMKFNPAHPKWLNRDRFILSNGHACVLQYIMCHLLGYKLTIEDLKQFRQVGSKTPGHPETHNPDLNIETGAGPLGQGIASAVGLAIGKAHSAAVYNKPGFDLFSNYTFCFLGDGCLQEGVSSEACSLAGHLKLSNLIAVWDNNKITIDGATSMSFDEDVEKRFEAYGWNIVRVANGDTDLDGIEKGFREAMSCTDKPTLINLKTTIGYGSELQGTHSVHGSPLKPEDCVHVKKLFGFDPTKTFQVPPEVYAYYKERVAIASSAEEEYKKMYASYKQSYPDLSNQLERILSRKFPEGWEKHLPVYKPGDKAVATRKLSEIVLDALCPVLPELVGGSADLTPSNLTRWEGAADFQPPSSKLGTYAGRYIRYGIREHGMAGIMNGLAVYGPIIPYGGTFLNFVSYAAGAVRMAALNNSRVIYVATHDSIGLGEDGPTHQPIETFAHFRAMPNINCWRPADGNETSAAYYSALTSDSTPSILALTRQNLPQLENSTIENALKGGYVMLENKEADITLVGTGSEVSLCIDTVKTLETEYNLKARVVSLPCWEVFEQQPESYRLSVIPDGIPAMSVEVWATNGWRRYVHEAFGMHTFGDSGPAPKLYEKFHFTTSGVAQRAKKTVDAYKDIPYIRSPVRRAF.

A substrate-binding site is contributed by H32. Residues H72 and 121 to 123 (GPL) contribute to the thiamine diphosphate site. Residue D162 participates in Mg(2+) binding. Positions 163 and 192 each coordinate thiamine diphosphate. Residues N192 and I194 each contribute to the Mg(2+) site. The substrate site is built by H268, R363, and S390. Position 268 (H268) interacts with thiamine diphosphate. Thiamine diphosphate-binding residues include E422 and F448. Residue E422 is the Proton donor of the active site. 3 residues coordinate substrate: H472, D480, and R531.

This sequence belongs to the transketolase family. Homodimer. Mg(2+) serves as cofactor. Ca(2+) is required as a cofactor. The cofactor is Mn(2+). It depends on Co(2+) as a cofactor. Requires thiamine diphosphate as cofactor.

It catalyses the reaction D-sedoheptulose 7-phosphate + D-glyceraldehyde 3-phosphate = aldehydo-D-ribose 5-phosphate + D-xylulose 5-phosphate. Functionally, catalyzes the transfer of a two-carbon ketol group from a ketose donor to an aldose acceptor, via a covalent intermediate with the cofactor thiamine pyrophosphate. This is Probable transketolase from Schizosaccharomyces pombe (strain 972 / ATCC 24843) (Fission yeast).